Consider the following 2581-residue polypeptide: MGSIDNTARGSSASEPIAIIGMSAKFAGDATNTDNLWRMLIEGRSGWSPFPDSRFRSEGVYHPNNERLNSTHVKGAHFLAEDVGLFDAAFFGYSGETAASMDPQYRLQLESVYEALENAGLPLTKIAGSNTSVFTGVFVHDYRDGFLRDADNLPRLMATGTGVPMMANRVSHFFDLRGASMTIETACSSGMVAVHQAVQSLRTGEADMSIVGGANLTLNPDMFKALGSAGFLSADGKSYAFDSRASGYGRGEGVGTLVVKRLSDALAAGDPIRAVIRESMLNQDGKTETITSPSLEAQEALVRGCYQKAGLDPRETQYFEAHGTGTQAGDTIEAQGIATVFASRQEPLLIGSIKTNVGHTEAASGLASIIKTALAMENGVIPPSINFEKPNPKISLDDWNLKLVREVETWPAGPIRRASINNFGYGGSNAHIILEDSASWVKAIGGQNGRTNGFADGHSNGPNANGHHSTLDPHVQESQVISKVLVLSGKDKQACEKMTANLADYLRQTQSTNSNPRELLDSLIYTLGQRRSRFPWVVAHPIPVTEGYETVVQTLQSPKFKPTRTSRRPRIGMVFTGQGAQWNAMGRELIEAYPVFKASLQEAAGYLEQFGAEWSLMDELMRDAEKSRINEVGLSTPICVAVQISLVRLLRAWGIVPVAVTSHSSGEIAAAYSAGAVSYKTAMAFSYYRAVLAADKSLRGPVKGGMIAVGLGLEETESYLRRLSSEGQAAIACINSPSSITVSGDLSAVVELEDLANADGVFARRLKVDTAWHSHHMTPIANVYCEALENTRAEKIDRDALTTVAFSSPVTGGRITDAQQIARPEHWVESLVQPVQFVAAFTDMVLGGSGSVGSNVDVVVEVGPHTALGGPIQEILGLPEFKDLNIPYYGTLVRKLDARDSMHALASSLLREGYPVNMGAVNFAHGRGQYVKVLTNLPSYPWNHQAKHWAEPRLNRAIRERSQPPHDLLGSIVEGSNPNAPSWRHILRMSESPWTRDHAIQSNVIYPAAGYICLAIEASRQLHVLNQTAGEIGGYRLRDVDFLQALMIPDSSDGIEIQTTIRPVSEKDIASQGWRHFEVWSVTTDNRWTQHAKGLVSVELGESSVRMSRPARKNITGYTRRILPADLFANLRNLGITHGPVFQNMDSIIQSGSEMRSVVSMTLPDVSVPNDLPRNHILHPVTLDSVITAPYSAVPGAAAREITAKVPRSVERFWVSSKISHDAGHSLEADTTLIRDDDQGMAADVLVSDHDTGNIMLEMNGFSYQSLGRSTSLQKSESWPNELCNKVVWSLDISTPLPATLAAVRNELACTVQSAECDTTKATLRACIYFMQLALVALDSHDIAEMEQHNASYYTWMKDTVELASSGKLFEGSAEWLYHSENERQLHIEQVQTRLDGEIVCRLGTQLVDILRGHTGALDLVMQDNLLSRFYSYAPRWKRAGTQIAGLLRHLSHKNPRARILEVGAATGAIALHALGALGTSDSGGPNASMYHFTDTSTALFETARESLQPWADLLSFDELDIEHDPASQGYTPGTYDIVIASNIRSISESTSQALSNISSLLKPGGTLLLVEPLKYEVDVHFVRRLLPGRWWDDSTELKANLCLDMPSWENQLLSAGFTGVELELLDREDPQEAALVTFMSTVQLPQPPKSNVDADQVVIVTSRNGCPPAAWVKGLKDAIAAYTVSEGKLGPIVQDLESLAATAASYADKICIFLGEVDEGILYNLNSTLLEGIRSMSTNSKGLIWVTRGGAVDCERPEMSLATGFIRSLRNEYVGRKLLTLDLDPKGTPWSDVSMAAIAKILGTVIGNSAGGSMVEKGAVELEYAERDGVILIPRIYHDVTRNRMLSPDASDAAMEKISIENFYQPTRPLCLKPDLLVFGDDDFSADYLEHLPPASLEVQPKAYGATLNSVGDHIAGFECAGIITQVGEEAAAQGYAVGDRVLSVLRHSSFPSRAVVDWKLTTRMPTDMTFQEGASLPLSFLSAYFALVEIARLQRSRSVLIHAGAGDVGQAAIMVAQHLGAEVYVTVGSPAERGLLILKYGLPADHIFSCTDLSLANAVVAATQGRGVDVVLNSLTGPLFQESLNLVAPLGHFVEIGRRNTQTNGYMHMRPFDRGISFATLDIPSLLEYRAMDVHRCLAELTRLIELKAVTPVHPITFHAIGEIAEASRLLKAGDQIGKVVLSVDEHSTVTAVPSKPAAKLSSEVSYLIVGGSGGLAQSVAHWMVNRGARNLVLLSRSAGTSEKTAAFAEDLRQAGCRRVLPISCDVANEESLGDAINQCAQEGLPPIRGIIHAAFVLRDAFVEKMTLDDWTYTIQSKVAGTWNLHNQFNLPGDLDFFVLFSSINGILGYASQSAYSAAGAYEDALAHWRVKHCGLPAVSIDLSVVNAVGYVAEANASETLRRSLLRAGRRVIDEDHVLGSLESAILSPFDPQFVVGGINSGPGPHWDLDGDLGRDMRVLPLKYRPPAVTGQSQDDDSSSDSLAAKMIACESQGDAVRVVGTAIAEMLAEMFLVPIEDVDLGQSPSQQGVDSLVAVEVRNMLFSQAGAEVSIFNIMQSPSLTQLAIDVVDRSAHVKLAG.

Residues 14–436 form the Ketosynthase family 3 (KS3) domain; that stretch reads SEPIAIIGMS…GSNAHIILED (423 aa). Active-site for beta-ketoacyl synthase activity residues include Cys-187, His-322, and His-359. The malonyl-CoA:ACP transacylase (MAT) domain stretch occupies residues 574-868; the sequence is VFTGQGAQWN…VVEVGPHTAL (295 aa). An N-terminal hotdog fold region spans residues 966–1103; that stretch reads HDLLGSIVEG…GLVSVELGES (138 aa). Residues 966–1270 form a dehydratase (DH) domain region; the sequence is HDLLGSIVEG…GFSYQSLGRS (305 aa). Residues 966-1273 enclose the PKS/mFAS DH domain; sequence HDLLGSIVEG…YQSLGRSTSL (308 aa). Residue His-998 is the Proton acceptor; for dehydratase activity of the active site. Residues 1119-1273 are C-terminal hotdog fold; that stretch reads TRRILPADLF…YQSLGRSTSL (155 aa). Asp-1184 acts as the Proton donor; for dehydratase activity in catalysis. The interval 1461–1568 is methyltransferase (CMet) domain; that stretch reads LEVGAATGAI…SSLLKPGGTL (108 aa). An enoyl reductase (ER)domain region spans residues 1873-2184; it reads LKPDLLVFGD…AGDQIGKVVL (312 aa). Residues 2207–2389 are ketoreductase (KR) domain; that stretch reads VSYLIVGGSG…AVSIDLSVVN (183 aa). The region spanning 2497–2574 is the Carrier domain; sequence DAVRVVGTAI…QLAIDVVDRS (78 aa). Position 2534 is an O-(pantetheine 4'-phosphoryl)serine (Ser-2534).

The protein operates within secondary metabolite biosynthesis. In terms of biological role, highly reducing polyketide synthase; part of the gene cluster that mediates the biosynthesis of sorbicillinoids, a diverse group of yellow secondary metabolites that restrict growth of competing pathogenic fungi but not of bacteria. Sorbicillinoids biosynthesis requires the action of two PKSs. SorA iteratively combines three acetyl units and the growing chain is modified by the ketoacyl reductase subunit, and optional by the enoyl reductase subunit in the second cycle. The polyketide is then handed over to the PKS SorB, which adds three more acetyl units, and two methyl groups. SorB releases an aldehyde, which undergoes spontaneous cyclization resulting in the formation of sorbicillin or 2',3'-dihydrosorbicillin. The monooxygenase sorC oxidizes sorbicillin and 2',3'-dihydrosorbicillin to 2',3'-dihydrosorbicillinol and sorbicillinol, respectively. The oxidoreductase sorD further converts sorbicillinol into oxosorbicillinol. Sorbicillinol is the building block for the other sorbicillinoids such as disorbicillinol, bisvertinolon, and dihydrobisvertinolone. This is Highly reducing polyketide synthase sorA from Penicillium rubens (strain ATCC 28089 / DSM 1075 / NRRL 1951 / Wisconsin 54-1255) (Penicillium chrysogenum).